The chain runs to 602 residues: MLRTHLAGSLRPEQAEQTVTLTGWVARRRDHGGVIFIDLRDASGVAQVVFRAGDVAEQAHRLRAEYCVRVTGTVEVRPEGNQNFEIPTGAIEVNATELEVLNESAPLPFQLDDQVGEEARLKYRYLDLRREGPGSAIRLRSKVSAAARGVLAHHEFVEVETPTLTRSTPEGARDFLVPSRLQPGSFYALPQSPQLFKQLLMVGGIERYYQIARCYRDEDFRADRQPEFTQLDIEMAFVNQDDIILLAEEILTALWKLVGHEIKTPIDRMTYTEAMRRYGSDKPDLRFDIELVECMDFFKDTTFRVFQAEYVGAVVMPGGASQPRKQLDAWQEWAKQRGAKGLAYVLVGEDGTLGGPVAKNLTDAEREGLAAHVGAQPGDCVFFAAGATKPMRALLGAARGEIARKKDLIDPDAWAFVWIVDAPMFEPTADATASGDVALGHSAWTAVHHAFTSPKPEFFDTFDTDPDSALAYAYDIVCNGNEIGGGSIRIHRKDIQERVFKVMGISEEEAQEQFGFLLDAFAFGAPPHGGIAFGWDRITALLAGMDSIREVIAFPKSGGGVDPLTDAPAPISAQQRKESGIDAKPEKKSEDKKSEGDTAEAK.

Residue glutamate 170 participates in L-aspartate binding. Residues 194 to 197 (QLFK) form an aspartate region. Arginine 216 serves as a coordination point for L-aspartate. ATP-binding positions include 216-218 (RDE) and glutamine 225. Histidine 448 contacts L-aspartate. Glutamate 482 provides a ligand contact to ATP. An L-aspartate-binding site is contributed by arginine 489. 534-537 (GWDR) is an ATP binding site. Residues 559-602 (GGVDPLTDAPAPISAQQRKESGIDAKPEKKSEDKKSEGDTAEAK) are disordered. Residues 575 to 602 (QRKESGIDAKPEKKSEDKKSEGDTAEAK) show a composition bias toward basic and acidic residues.

This sequence belongs to the class-II aminoacyl-tRNA synthetase family. Type 1 subfamily. Homodimer.

The protein localises to the cytoplasm. It catalyses the reaction tRNA(Asx) + L-aspartate + ATP = L-aspartyl-tRNA(Asx) + AMP + diphosphate. Aspartyl-tRNA synthetase with relaxed tRNA specificity since it is able to aspartylate not only its cognate tRNA(Asp) but also tRNA(Asn). Reaction proceeds in two steps: L-aspartate is first activated by ATP to form Asp-AMP and then transferred to the acceptor end of tRNA(Asp/Asn). This Rhodococcus erythropolis (strain PR4 / NBRC 100887) protein is Aspartate--tRNA(Asp/Asn) ligase.